The primary structure comprises 199 residues: Potassium-transporting ATPase KdpC subunit 2 (199 aa).

A helical transmembrane segment spans residues 13-33; the sequence is ITLIFWLVTAIIYPLAILVVG.

This sequence belongs to the KdpC family. The system is composed of three essential subunits: KdpA, KdpB and KdpC.

It localises to the cell inner membrane. Part of the high-affinity ATP-driven potassium transport (or Kdp) system, which catalyzes the hydrolysis of ATP coupled with the electrogenic transport of potassium into the cytoplasm. This subunit acts as a catalytic chaperone that increases the ATP-binding affinity of the ATP-hydrolyzing subunit KdpB by the formation of a transient KdpB/KdpC/ATP ternary complex. The sequence is that of Potassium-transporting ATPase KdpC subunit 2 from Nostoc sp. (strain PCC 7120 / SAG 25.82 / UTEX 2576).